A 459-amino-acid chain; its full sequence is Autophagy-related protein 18 (459 aa).

WD repeat units lie at residues 1–39 (MTSPALNFITFNQDHSCLAVGTSKGFRIYHTDPFSRIFS) and 188–228 (AHRS…KLYQ). Residues 229 to 232 (FRRG) are necessary for proper localization to vacuole membrane. Positions 229–233 (FRRGT) match the L/FRRG motif motif. A WD 3 repeat occupies 233-272 (TYPSTIYSMSFNLSSTLLCVSSTSDTIHIFRLGAPPGNTT). The disordered stretch occupies residues 264-339 (LGAPPGNTTP…RGSGSFSSML (76 aa)). Over residues 265-277 (GAPPGNTTPAGAP) the composition is skewed to low complexity. Positions 285-296 (RQDRWSRARSYD) are enriched in basic and acidic residues. Gly residues predominate over residues 319–330 (PGAGNNQGGHTR). One copy of the WD 4 repeat lies at 393-433 (APGGPLRSVVAMSSSSPQVMVVTSDGGFYVYNIDMEHGGEG).

The protein belongs to the WD repeat PROPPIN family. As to quaternary structure, component of the PI(3,5)P2 regulatory complex. Interacts with ATG2 and ATG9. The ATG2-ATG18 complex is essential for autophagosome formation.

The protein localises to the preautophagosomal structure membrane. It is found in the vacuole membrane. It localises to the endosome membrane. Component of the PI(3,5)P2 regulatory complex that regulates both the synthesis and turnover of phosphatidylinositol 3,5-bisphosphate (PtdIns(3,5)P2). Plays an important role in osmotically-induced vacuole fragmentation. Required for cytoplasm to vacuole transport (Cvt) vesicle formation, pexophagy and starvation-induced autophagy. Involved in correct ATG9 trafficking to the pre-autophagosomal structure. With ATG2, protects ATG8 from ATG4-mediated cleavage. Autophagy is required for proper vegetative growth, asexual/sexual reproduction, and full virulence. Autophagy is particularly involved in the biosynthesis of deoxynivalenol (DON), an important virulence determinant. The polypeptide is Autophagy-related protein 18 (Gibberella zeae (strain ATCC MYA-4620 / CBS 123657 / FGSC 9075 / NRRL 31084 / PH-1) (Wheat head blight fungus)).